The sequence spans 274 residues: MAKITAAEVNKLRKATGAGMMDCKKALVEAEGDFDGAIELLRKKGQKVAAKRADRDSSEGAAIAQVNGDNTKGVIISLNCETDFVAKNDDFIKMANNFAEIALNYSSKEEFLKADYKGISVEDKLTEQTGVIGEKIEIGAFRTLEAPFVGSYIHAGNKIAVLTGLSKSVDGAEEAAKNVSMQAAAMNPVALNEEGVDQGTIDKEIEIAKDTLREEGKPENMLDKIAQGKLQRFFKDNTLVHQAYIKDNKQSVADYVKTVDGALEVVAFERVALG.

The interval 82–85 (TDFV) is involved in Mg(2+) ion dislocation from EF-Tu.

This sequence belongs to the EF-Ts family.

It localises to the cytoplasm. In terms of biological role, associates with the EF-Tu.GDP complex and induces the exchange of GDP to GTP. It remains bound to the aminoacyl-tRNA.EF-Tu.GTP complex up to the GTP hydrolysis stage on the ribosome. In Christiangramia forsetii (strain DSM 17595 / CGMCC 1.15422 / KT0803) (Gramella forsetii), this protein is Elongation factor Ts.